The chain runs to 306 residues: Ribosomal protein L11 methyltransferase (306 aa).

Residues threonine 154, glycine 179, aspartate 201, and asparagine 242 each coordinate S-adenosyl-L-methionine.

The protein belongs to the methyltransferase superfamily. PrmA family.

It localises to the cytoplasm. The catalysed reaction is L-lysyl-[protein] + 3 S-adenosyl-L-methionine = N(6),N(6),N(6)-trimethyl-L-lysyl-[protein] + 3 S-adenosyl-L-homocysteine + 3 H(+). In terms of biological role, methylates ribosomal protein L11. The sequence is that of Ribosomal protein L11 methyltransferase from Xanthomonas axonopodis pv. citri (strain 306).